A 351-amino-acid polypeptide reads, in one-letter code: ATP-dependent 6-phosphofructokinase subunit gamma (351 aa).

Heterododecamer of 4 alpha, 4 beta and 4 gamma chains. The gamma chain bridges the N-terminal halves of the alpha and beta subunits.

The protein resides in the cytoplasm. The protein operates within carbohydrate degradation; glycolysis; D-glyceraldehyde 3-phosphate and glycerone phosphate from D-glucose: step 3/4. Functionally, structural subunit of pyrophosphate--fructose 6-phosphate 1-phosphotransferase. Not required for catalytic activity. Fine-tunes allosteric regulation of the ATP-PFK by ATP, fructose 2,6-bisphosphate and AMP. The protein is ATP-dependent 6-phosphofructokinase subunit gamma (PFK3) of Komagataella pastoris (Yeast).